The primary structure comprises 59 residues: uncharacterized protein (59 aa).

A helical transmembrane segment spans residues W6–I26.

It is found in the membrane. This is an uncharacterized protein from Escherichia coli O157:H7.